A 447-amino-acid polypeptide reads, in one-letter code: MTAHEVNFDGLVGLTHHYAGLSFGNEASTRHRFQVSNPRLAVKQGLLKMKALADAGFPQAVIPPHERPFIPALRQLGFTGSDEQILDKVARQAPRWLSSVSSASPMWVANAATVCPSADALDGKVHLTVANLNNKFHRALEAPVTEALLRAIFRDESQFSVHSALPQVALLGDEGAANHNRLGGEYGSAGVQLFVYGREEENEIRPARYPARQSREASEAVARLNQVNPQQVIFAQQNPEVIDQGVFHNDVIAVSNRQVLFCHEAAFARQKVLINQLRTRVDGFMAIEVPAGEVSVSDAVATYLFNSQLLSRDDGSMLLVLPRECQDHAGVWRYLNKLVAEDNPISAMQVFDLRESMANGGGPACLRLRVVLTEEERRAVNPAVMMNDALFTALNAWADRYYRDRLTAADLADPLLLREGREALDVLTRLLDLGSVYPFQQTGAADG.

Substrate contacts are provided by residues 19 to 28, Asn110, and 137 to 138; these read AGLSFGNEAS and HR. Residue Glu174 is part of the active site. Arg212 is a binding site for substrate. Residue His248 is part of the active site. Residues Asp250 and Asn359 each coordinate substrate. The active-site Nucleophile is the Cys365.

The protein belongs to the succinylarginine dihydrolase family. Homodimer.

It carries out the reaction N(2)-succinyl-L-arginine + 2 H2O + 2 H(+) = N(2)-succinyl-L-ornithine + 2 NH4(+) + CO2. It functions in the pathway amino-acid degradation; L-arginine degradation via AST pathway; L-glutamate and succinate from L-arginine: step 2/5. Catalyzes the hydrolysis of N(2)-succinylarginine into N(2)-succinylornithine, ammonia and CO(2). The chain is N-succinylarginine dihydrolase from Salmonella typhi.